We begin with the raw amino-acid sequence, 361 residues long: Phosphoserine aminotransferase (361 aa).

Arginine 43 provides a ligand contact to L-glutamate. Pyridoxal 5'-phosphate contacts are provided by residues 77–78 (AS), tryptophan 103, threonine 153, aspartate 173, and glutamine 196. Lysine 197 is modified (N6-(pyridoxal phosphate)lysine). 238 to 239 (NT) contributes to the pyridoxal 5'-phosphate binding site.

This sequence belongs to the class-V pyridoxal-phosphate-dependent aminotransferase family. SerC subfamily. In terms of assembly, homodimer. Pyridoxal 5'-phosphate serves as cofactor.

It is found in the cytoplasm. The catalysed reaction is O-phospho-L-serine + 2-oxoglutarate = 3-phosphooxypyruvate + L-glutamate. It catalyses the reaction 4-(phosphooxy)-L-threonine + 2-oxoglutarate = (R)-3-hydroxy-2-oxo-4-phosphooxybutanoate + L-glutamate. It functions in the pathway amino-acid biosynthesis; L-serine biosynthesis; L-serine from 3-phospho-D-glycerate: step 2/3. Functionally, catalyzes the reversible conversion of 3-phosphohydroxypyruvate to phosphoserine and of 3-hydroxy-2-oxo-4-phosphonooxybutanoate to phosphohydroxythreonine. The polypeptide is Phosphoserine aminotransferase (serC) (Alkalihalobacillus alcalophilus (Bacillus alcalophilus)).